The following is a 290-amino-acid chain: Succinate dehydrogenase [ubiquinone] iron-sulfur subunit, mitochondrial (290 aa).

Residues 1–38 constitute a mitochondrion transit peptide; it reads MAAAVVGVSLRRGVPARFLRAGLRPVRGLEAVHGICRG. In terms of domain architecture, 2Fe-2S ferredoxin-type spans 50 to 143; the sequence is KKFSIYRWDP…TTKIYPLPHM (94 aa). The [2Fe-2S] cluster site is built by Cys-103, Cys-108, Cys-111, and Cys-123. Positions 186 to 216 constitute a 4Fe-4S ferredoxin-type domain; the sequence is DRQKLDGLYECILCACCSTSCPSYWWNGDKY. Residues Cys-196, Cys-199, and Cys-202 each coordinate [4Fe-4S] cluster. Cys-206 contributes to the [3Fe-4S] cluster binding site. Residue Trp-211 coordinates a ubiquinone. [3Fe-4S] cluster contacts are provided by Cys-253 and Cys-259. Cys-263 serves as a coordination point for [4Fe-4S] cluster.

The protein belongs to the succinate dehydrogenase/fumarate reductase iron-sulfur protein family. In terms of assembly, component of complex II composed of four subunits: the flavoprotein (FP) SDHA, iron-sulfur protein (IP) SDHB, and a cytochrome b560 composed of SDHC and SDHD. Requires [2Fe-2S] cluster as cofactor. [3Fe-4S] cluster serves as cofactor. [4Fe-4S] cluster is required as a cofactor.

The protein resides in the mitochondrion inner membrane. It catalyses the reaction a quinone + succinate = fumarate + a quinol. The catalysed reaction is (R)-malate + a quinone = enol-oxaloacetate + a quinol. It carries out the reaction (S)-malate + a quinone = enol-oxaloacetate + a quinol. It participates in carbohydrate metabolism; tricarboxylic acid cycle; fumarate from succinate (eukaryal route): step 1/1. Enol-oxaloacetate inhibits the succinate dehydrogenase activity. Functionally, iron-sulfur protein (IP) subunit of the succinate dehydrogenase complex (mitochondrial respiratory chain complex II), responsible for transferring electrons from succinate to ubiquinone (coenzyme Q). SDH also oxidizes malate to the non-canonical enol form of oxaloacetate, enol-oxaloacetate. Enol-oxaloacetate, which is a potent inhibitor of the succinate dehydrogenase activity, is further isomerized into keto-oxaloacetate. The polypeptide is Succinate dehydrogenase [ubiquinone] iron-sulfur subunit, mitochondrial (SDHB) (Gallus gallus (Chicken)).